Here is a 131-residue protein sequence, read N- to C-terminus: Holo-[acyl-carrier-protein] synthase (131 aa).

Mg(2+) contacts are provided by aspartate 8 and glutamate 62.

Belongs to the P-Pant transferase superfamily. AcpS family. The cofactor is Mg(2+).

It is found in the cytoplasm. It carries out the reaction apo-[ACP] + CoA = holo-[ACP] + adenosine 3',5'-bisphosphate + H(+). In terms of biological role, transfers the 4'-phosphopantetheine moiety from coenzyme A to a Ser of acyl-carrier-protein. The polypeptide is Holo-[acyl-carrier-protein] synthase (Delftia acidovorans (strain DSM 14801 / SPH-1)).